The sequence spans 358 residues: CRS2-associated factor 2, mitochondrial (358 aa).

The transit peptide at 1–28 (MLSIRRSLTLAKEPKDLFLFLCNLRARC) directs the protein to the mitochondrion. Residues 35-64 (DPPFSPLSKPTKPPKEKKKQKTKKQDQSSE) form a disordered region. CRM domains lie at 141–239 (ETLT…SRPI) and 261–357 (DGLE…ELVT).

Part of large ribonucleo-protein complexes that include group IIB introns.

The protein localises to the mitochondrion. In terms of biological role, may be involved in the splicing of group IIB introns in mitochondria. The sequence is that of CRS2-associated factor 2, mitochondrial from Arabidopsis thaliana (Mouse-ear cress).